Here is a 6857-residue protein sequence, read N- to C-terminus: Replicase polyprotein 1ab (6857 aa).

The region spanning 1679 to 1860 (FEQYYEFKIG…QYNQAFAVIK (182 aa)) is the Macro domain. Residues 2158-2191 (QVGQGGQQDGQVDQQIKESEQVVEPSAPSGQESP) are disordered. 10 consecutive transmembrane segments (helical) span residues 2303-2323 (LTYN…FGVL), 2330-2350 (TPFY…LMIW), 2385-2405 (LVQW…DYVV), 2535-2555 (LFYS…YVLF), 2639-2659 (VTVS…VVVL), 2664-2684 (FIWF…IILF), 2889-2909 (TTLV…LMVG), 3057-3077 (IISP…FLIL), 3106-3126 (VLFV…LALW), and 3142-3162 (LFIL…GFVF). Residues 2303–2683 (LTYNIKFKLI…VMMPVFVIIL (381 aa)) form an HD1 region. The tract at residues 2889–3162 (TTLVIVMGVL…FLFMVGGFVF (274 aa)) is HD2. Catalysis depends on charge relay system; for 3C-like serine proteinase activity residues histidine 3304, glutamate 3347, and serine 3416. Positions 3555-3738 (HLHFIFSIYF…IVIVLSFRVF (184 aa)) are HD3. 7 consecutive transmembrane segments (helical) span residues 3556 to 3575 (LHFI…YWWL), 3580 to 3602 (SVVL…NVLF), 3611 to 3631 (LAVT…LGFL), 3640 to 3660 (SLII…VVNV), 3663 to 3683 (AIFV…LGIV), 3698 to 3718 (AVFT…LLLF), and 3723 to 3738 (LMSF…FRVF). One can recognise a NiRAN domain in the interval 4566–4797 (DFKLLRGAWS…ANEMEIPTDY (232 aa)). The RdRp catalytic domain maps to 5105 to 5256 (FDVFGSDYTK…FSKPEALKIF (152 aa)). Positions 5413–5528 (FDKVCFCCPN…NGVAQLLTSV (116 aa)) constitute a CV ZBD domain. Residues cysteine 5417, cysteine 5420, cysteine 5428, cysteine 5431, cysteine 5438, cysteine 5441, histidine 5445, histidine 5451, cysteine 5460, cysteine 5462, cysteine 5483, and cysteine 5486 each contribute to the Zn(2+) site. The (+)RNA virus helicase ATP-binding domain maps to 5633–5812 (NQPWRLATCF…LQLATQKRYL (180 aa)). Residues 5813–5972 (TACYRCPPQI…FGMEKQSDFN (160 aa)) form the (+)RNA virus helicase C-terminal domain. In terms of domain architecture, ExoN spans 5970-6183 (DFNIIPEVSS…YLASYEAAFK (214 aa)). Active-site residues include aspartate 5984, glutamate 5986, and aspartate 6085. Zn(2+) contacts are provided by histidine 6149, cysteine 6153, and histidine 6157. Residues histidine 6161 and aspartate 6166 contribute to the active site. Cysteine 6172 contributes to the Zn(2+) binding site. Residues 6451 to 6591 (LPDTLFSTGR…GEDDIQTFYP (141 aa)) enclose the NendoU domain. Catalysis depends on residues histidine 6487, histidine 6504, lysine 6536, lysine 6633, aspartate 6709, lysine 6737, and glutamate 6771. Residues 6593-6857 (KDFVRSYYEW…EVPMLCQMEH (265 aa)) enclose the Nidovirus-type SAM-dependent 2'-O-MTase domain.

In terms of processing, specific enzymatic cleavages in vivo by its own protease yield mature proteins. 3CL-PRO is autocatalytically processed.

It localises to the host membrane. It catalyses the reaction RNA(n) + a ribonucleoside 5'-triphosphate = RNA(n+1) + diphosphate. The catalysed reaction is ATP + H2O = ADP + phosphate + H(+). In terms of biological role, the 3C-like serine proteinase is responsible for the majority of cleavages. Its function is as follows. The helicase which contains a zinc finger structure displays RNA and DNA duplex-unwinding activities with 5' to 3' polarity. Acts on both ssRNA and dsRNA in a 3' to 5' direction. Functionally, nendoU is a Mn(2+)-dependent, uridylate-specific enzyme, which leaves 2'-3'-cyclic phosphates 5' to the cleaved bond. The chain is Replicase polyprotein 1ab (rep) from Equus caballus (Horse).